The primary structure comprises 525 residues: UPF0288 protein MM_0912 (525 aa).

The protein belongs to the UPF0288 family.

The chain is UPF0288 protein MM_0912 from Methanosarcina mazei (strain ATCC BAA-159 / DSM 3647 / Goe1 / Go1 / JCM 11833 / OCM 88) (Methanosarcina frisia).